Consider the following 310-residue polypeptide: Ribosomal RNA small subunit methyltransferase H (310 aa).

Residues glycine 32–histidine 34, aspartate 52, phenylalanine 79, aspartate 100, and glutamine 107 contribute to the S-adenosyl-L-methionine site.

This sequence belongs to the methyltransferase superfamily. RsmH family.

The protein localises to the cytoplasm. It carries out the reaction cytidine(1402) in 16S rRNA + S-adenosyl-L-methionine = N(4)-methylcytidine(1402) in 16S rRNA + S-adenosyl-L-homocysteine + H(+). Functionally, specifically methylates the N4 position of cytidine in position 1402 (C1402) of 16S rRNA. This Geobacillus kaustophilus (strain HTA426) protein is Ribosomal RNA small subunit methyltransferase H.